Consider the following 213-residue polypeptide: Iron sulfur cluster assembly protein 1, mitochondrial (213 aa).

This sequence belongs to the NifU family. As to quaternary structure, component of the core Fe-S cluster (ISC) assembly machinery. [2Fe-2S] cluster serves as cofactor.

The protein resides in the mitochondrion matrix. Its pathway is cofactor biosynthesis; iron-sulfur cluster biosynthesis. Functionally, scaffold protein for the de novo synthesis of iron-sulfur (Fe-S) clusters within mitochondria, which is required for maturation of both mitochondrial and cytoplasmic [2Fe-2S] and [4Fe-4S] proteins. First, a [2Fe-2S] cluster is transiently assembled on the scaffold protein ISU1. In a second step, the cluster is released from ISU1, transferred to a glutaredoxin, followed by the formation of mitochondrial [2Fe-2S] proteins, the synthesis of [4Fe-4S] clusters and their target-specific insertion into the recipient apoproteins. Cluster assembly on ISU1 depends on the function of the cysteine desulfurase complex NFS1-ISD11, which serves as the sulfur donor for cluster synthesis, the iron-binding protein frataxin as the putative iron donor, and the electron transfer chain comprised of ferredoxin reductase and ferredoxin, which receive their electrons from NADH. This chain is Iron sulfur cluster assembly protein 1, mitochondrial (ISU1), found in Candida glabrata (strain ATCC 2001 / BCRC 20586 / JCM 3761 / NBRC 0622 / NRRL Y-65 / CBS 138) (Yeast).